A 318-amino-acid chain; its full sequence is Probable endolytic peptidoglycan transglycosylase RlpA (318 aa).

Positions M1 to A21 are cleaved as a signal peptide. The segment at D121–A191 is disordered. Polar residues predominate over residues H125 to P137.

Belongs to the RlpA family.

Lytic transglycosylase with a strong preference for naked glycan strands that lack stem peptides. The sequence is that of Probable endolytic peptidoglycan transglycosylase RlpA from Treponema pallidum (strain Nichols).